A 159-amino-acid chain; its full sequence is 2-C-methyl-D-erythritol 2,4-cyclodiphosphate synthase (159 aa).

A divalent metal cation is bound by residues D9 and H11. 4-CDP-2-C-methyl-D-erythritol 2-phosphate is bound by residues 9–11 (DVH) and 35–36 (HS). Residue H43 participates in a divalent metal cation binding. Residues 57 to 59 (DIG), 62 to 66 (FPDTD), 133 to 136 (TTTE), F140, and R143 contribute to the 4-CDP-2-C-methyl-D-erythritol 2-phosphate site.

The protein belongs to the IspF family. Homotrimer. The cofactor is a divalent metal cation.

The catalysed reaction is 4-CDP-2-C-methyl-D-erythritol 2-phosphate = 2-C-methyl-D-erythritol 2,4-cyclic diphosphate + CMP. The protein operates within isoprenoid biosynthesis; isopentenyl diphosphate biosynthesis via DXP pathway; isopentenyl diphosphate from 1-deoxy-D-xylulose 5-phosphate: step 4/6. Functionally, involved in the biosynthesis of isopentenyl diphosphate (IPP) and dimethylallyl diphosphate (DMAPP), two major building blocks of isoprenoid compounds. Catalyzes the conversion of 4-diphosphocytidyl-2-C-methyl-D-erythritol 2-phosphate (CDP-ME2P) to 2-C-methyl-D-erythritol 2,4-cyclodiphosphate (ME-CPP) with a corresponding release of cytidine 5-monophosphate (CMP). In Mannheimia succiniciproducens (strain KCTC 0769BP / MBEL55E), this protein is 2-C-methyl-D-erythritol 2,4-cyclodiphosphate synthase.